The following is a 107-amino-acid chain: DNA-directed RNA polymerase subunit omega (107 aa).

The interval 81–107 (MEEEAAKGNADAGQGEGDAPKTPGQDG) is disordered.

Belongs to the RNA polymerase subunit omega family. As to quaternary structure, the RNAP catalytic core consists of 2 alpha, 1 beta, 1 beta' and 1 omega subunit. When a sigma factor is associated with the core the holoenzyme is formed, which can initiate transcription.

It catalyses the reaction RNA(n) + a ribonucleoside 5'-triphosphate = RNA(n+1) + diphosphate. Its function is as follows. Promotes RNA polymerase assembly. Latches the N- and C-terminal regions of the beta' subunit thereby facilitating its interaction with the beta and alpha subunits. This is DNA-directed RNA polymerase subunit omega from Alkalilimnicola ehrlichii (strain ATCC BAA-1101 / DSM 17681 / MLHE-1).